Reading from the N-terminus, the 129-residue chain is Protein yippee-like (129 aa).

In terms of domain architecture, Yippee spans Lys12 to Asp109. Zn(2+)-binding residues include Cys16, Cys19, Cys72, and Cys75.

It belongs to the yippee family.

This is Protein yippee-like from Solanum tuberosum (Potato).